Reading from the N-terminus, the 211-residue chain is FMN-dependent NADH:quinone oxidoreductase 2 (211 aa).

102–105 (MWNF) contacts FMN.

It belongs to the azoreductase type 1 family. In terms of assembly, homodimer. FMN serves as cofactor.

It carries out the reaction 2 a quinone + NADH + H(+) = 2 a 1,4-benzosemiquinone + NAD(+). The enzyme catalyses N,N-dimethyl-1,4-phenylenediamine + anthranilate + 2 NAD(+) = 2-(4-dimethylaminophenyl)diazenylbenzoate + 2 NADH + 2 H(+). In terms of biological role, quinone reductase that provides resistance to thiol-specific stress caused by electrophilic quinones. Also exhibits azoreductase activity. Catalyzes the reductive cleavage of the azo bond in aromatic azo compounds to the corresponding amines. In Bacillus cereus (strain ATCC 14579 / DSM 31 / CCUG 7414 / JCM 2152 / NBRC 15305 / NCIMB 9373 / NCTC 2599 / NRRL B-3711), this protein is FMN-dependent NADH:quinone oxidoreductase 2.